The primary structure comprises 74 residues: U3-agatoxin-Ao1d (74 aa).

Residues 1–20 (MKAAISLLLLSALLFVVIEA) form the signal peptide. A propeptide spanning residues 21–34 (ITYEEGKELFQGER) is cleaved from the precursor. 4 disulfides stabilise this stretch: C37–C53, C44–C58, C52–C68, and C60–C66. S72 is modified (serine amide).

The protein belongs to the neurotoxin 07 (Beta/delta-agtx) family. 02 (aga-3) subfamily. Expressed by the venom gland.

It is found in the secreted. In terms of biological role, insecticidal neurotoxin that induces an irreversible spastic paralysis when injected into insects. Modifies presynaptic voltage-gated sodium channels (Nav), causing them to open at the normal resting potential of the nerve. This leads to spontaneous release of neurotransmitter and repetitive action potentials in motor neurons. The protein is U3-agatoxin-Ao1d of Agelena orientalis (Funnel-web spider).